A 447-amino-acid polypeptide reads, in one-letter code: Alpha-1,3-mannosyl-glycoprotein 2-beta-N-acetylglucosaminyltransferase (447 aa).

Over 1-6 (MLKKQS) the chain is Cytoplasmic. The chain crosses the membrane as a helical; Signal-anchor for type II membrane protein span at residues 7–29 (AGLVLWGAILFVAWNALLLLFFW). The Lumenal portion of the chain corresponds to 30 to 447 (TRPVPSRLPS…TWDGYDPSWT (418 aa)). Residues Cys115 and Cys145 are joined by a disulfide bond. Substrate is bound by residues Arg117, Asp144, His190, and Asp212. Asp213 contributes to the Mn(2+) binding site. Cys239 and Cys305 form a disulfide bridge. The Proton acceptor role is filled by Asp291. Ser322 is a substrate binding site.

This sequence belongs to the glycosyltransferase 13 family. Interacts with MGAT4D. Interacts with BRI3. It depends on Mn(2+) as a cofactor.

It localises to the golgi apparatus membrane. Its subcellular location is the cytoplasm. The protein localises to the perinuclear region. The enzyme catalyses N(4)-(alpha-D-Man-(1-&gt;3)-[alpha-D-Man-(1-&gt;3)-[alpha-D-Man-(1-&gt;6)]-alpha-D-Man-(1-&gt;6)]-beta-D-Man-(1-&gt;4)-beta-D-GlcNAc-(1-&gt;4)-beta-D-GlcNAc)-L-asparaginyl-[protein] (N-glucan mannose isomer 5A1,2) + UDP-N-acetyl-alpha-D-glucosamine = N(4)-{beta-D-GlcNAc-(1-&gt;2)-alpha-D-Man-(1-&gt;3)-[alpha-D-Man-(1-&gt;3)-[alpha-D-Man-(1-&gt;6)]-alpha-D-Man-(1-&gt;6)]-beta-D-Man-(1-&gt;4)-beta-D-GlcNAc-(1-&gt;4)-beta-D-GlcNAc}-L-asparaginyl-[protein] + UDP + H(+). The protein operates within protein modification; protein glycosylation. Its function is as follows. Initiates complex N-linked carbohydrate formation. Essential for the conversion of high-mannose to hybrid and complex N-glycans. This is Alpha-1,3-mannosyl-glycoprotein 2-beta-N-acetylglucosaminyltransferase (MGAT1) from Oryctolagus cuniculus (Rabbit).